The sequence spans 454 residues: Tyrosine aminotransferase (454 aa).

Met-1 is modified (N-acetylmethionine). Residue Lys-280 is modified to N6-(pyridoxal phosphate)lysine. Position 448 is a phosphoserine (Ser-448).

This sequence belongs to the class-I pyridoxal-phosphate-dependent aminotransferase family. In terms of assembly, homodimer. Pyridoxal 5'-phosphate is required as a cofactor.

The enzyme catalyses L-tyrosine + 2-oxoglutarate = 3-(4-hydroxyphenyl)pyruvate + L-glutamate. It functions in the pathway amino-acid degradation; L-phenylalanine degradation; acetoacetate and fumarate from L-phenylalanine: step 2/6. Functionally, transaminase involved in tyrosine breakdown. Converts tyrosine to p-hydroxyphenylpyruvate. Can catalyze the reverse reaction, using glutamic acid, with 2-oxoglutarate as cosubstrate (in vitro). Has much lower affinity and transaminase activity for phenylalanine. The chain is Tyrosine aminotransferase (Tat) from Mus musculus (Mouse).